Here is a 135-residue protein sequence, read N- to C-terminus: uncharacterized protein (135 aa).

The protein belongs to the asp23 family.

This is an uncharacterized protein from Bacillus subtilis (strain 168).